A 440-amino-acid chain; its full sequence is Oligodendrocyte-myelin glycoprotein (440 aa).

The first 24 residues, 1 to 24 (MEYQILKMSLCLFILLFLTPGILC), serve as a signal peptide directing secretion. Positions 25–55 (ICPLQCICTERHRHVDCSGRNLSTLPSGLQE) constitute an LRRNT domain. N-linked (GlcNAc...) asparagine glycosylation is found at N45 and N61. LRR repeat units follow at residues 56 to 77 (NIIH…LTQY), 79 to 100 (NLRT…LPRS), 101 to 121 (LWNM…DTAY), 124 to 145 (NLKY…KNTL), 147 to 168 (SLEV…MPSK), 169 to 189 (LHIV…TLIN), 192 to 213 (NLTH…SFDQ), and 216 to 239 (QLQE…TYLL). An N-linked (GlcNAc...) asparagine glycan is attached at N103. N152, N176, N189, N192, and N234 each carry an N-linked (GlcNAc...) asparagine glycan. Ser/Thr-rich repeat units lie at residues 229–270 (CDHK…YPTP), 271–292 (SGFT…INSL), 293–335 (SVVT…VPYP), 336–377 (EDTS…SPTP), and 378–416 (MTLS…TPLP). 2 N-linked (GlcNAc...) asparagine glycosylation sites follow: N364 and N389. S417 is lipidated: GPI-anchor amidated serine. A propeptide spans 418 to 440 (VANAWKVNASFLLLLNVVVMLAV) (removed in mature form). N425 carries N-linked (GlcNAc...) asparagine glycosylation.

As to quaternary structure, binds to RTN4R. O-glycosylated in its Ser/Thr-rich repeat domain. Oligodendrocytes and myelin of the central nervous system.

The protein localises to the cell membrane. Functionally, cell adhesion molecule contributing to the interactive process required for myelination in the central nervous system. The sequence is that of Oligodendrocyte-myelin glycoprotein (OMG) from Homo sapiens (Human).